Here is a 383-residue protein sequence, read N- to C-terminus: Succinyl-diaminopimelate desuccinylase (383 aa).

His-73 lines the Zn(2+) pocket. Asp-75 is an active-site residue. Asp-107 is a binding site for Zn(2+). The active-site Proton acceptor is Glu-141. Zn(2+) contacts are provided by Glu-142, Glu-170, and His-356.

Belongs to the peptidase M20A family. DapE subfamily. Homodimer. Requires Zn(2+) as cofactor. Co(2+) serves as cofactor.

It carries out the reaction N-succinyl-(2S,6S)-2,6-diaminopimelate + H2O = (2S,6S)-2,6-diaminopimelate + succinate. Its pathway is amino-acid biosynthesis; L-lysine biosynthesis via DAP pathway; LL-2,6-diaminopimelate from (S)-tetrahydrodipicolinate (succinylase route): step 3/3. Functionally, catalyzes the hydrolysis of N-succinyl-L,L-diaminopimelic acid (SDAP), forming succinate and LL-2,6-diaminopimelate (DAP), an intermediate involved in the bacterial biosynthesis of lysine and meso-diaminopimelic acid, an essential component of bacterial cell walls. The protein is Succinyl-diaminopimelate desuccinylase of Pseudomonas putida (strain ATCC 700007 / DSM 6899 / JCM 31910 / BCRC 17059 / LMG 24140 / F1).